A 354-amino-acid chain; its full sequence is MTELKNDRYLRALLRQPVDVTPVWMMRRAGRYLPEYKATRAQAGDFMSLCKNAELACEVTLQPLRRYPLDAAILFSDILTIPDAMGLGLYFEAGEGPRFTAPVTCKADVEKLPIPDPEGELGYVMNAVRTIRRELKGEVPLIGFSGSPWTLATYMVEGGSSKAFTVIKKMMYADPQALHLLLDKLAKSVTLYLNAQIKAGAQSVMIFDTWGGVLTGRDYQQFSLYYMHKIVDGLLRENDGRRVPVTLFTKGGGQWLEAMAETGCDALGLDWTTDIADARRRVGHKVALQGNMDPSMLYAPPARIEDEVATILAGFGQGEGHVFNLGHGIHQDVPPEHAGAFVEAVHRLSAQYHN.

Substrate-binding positions include 27–31, Phe46, Asp77, Tyr154, Thr209, and His327; that span reads RRAGR.

The protein belongs to the uroporphyrinogen decarboxylase family. In terms of assembly, homodimer.

Its subcellular location is the cytoplasm. It catalyses the reaction uroporphyrinogen III + 4 H(+) = coproporphyrinogen III + 4 CO2. Its pathway is porphyrin-containing compound metabolism; protoporphyrin-IX biosynthesis; coproporphyrinogen-III from 5-aminolevulinate: step 4/4. Functionally, catalyzes the decarboxylation of four acetate groups of uroporphyrinogen-III to yield coproporphyrinogen-III. The sequence is that of Uroporphyrinogen decarboxylase from Salmonella typhimurium (strain LT2 / SGSC1412 / ATCC 700720).